The primary structure comprises 320 residues: ATP-dependent 6-phosphofructokinase (320 aa).

Residue G12 participates in ATP binding. 22–26 (RGVVR) is an ADP binding site. ATP contacts are provided by residues 73-74 (RF) and 103-106 (GDGS). D104 serves as a coordination point for Mg(2+). 126–128 (TID) contacts substrate. D128 (proton acceptor) is an active-site residue. ADP is bound at residue R155. Substrate is bound by residues R163 and 170 to 172 (MGR). Residues 186-188 (GCE), K212, and 214-216 (KKH) each bind ADP. Substrate-binding positions include E223, R244, and 250 to 253 (HIQR).

It belongs to the phosphofructokinase type A (PFKA) family. ATP-dependent PFK group I subfamily. Prokaryotic clade 'B1' sub-subfamily. In terms of assembly, homotetramer. Requires Mg(2+) as cofactor.

Its subcellular location is the cytoplasm. The catalysed reaction is beta-D-fructose 6-phosphate + ATP = beta-D-fructose 1,6-bisphosphate + ADP + H(+). Its pathway is carbohydrate degradation; glycolysis; D-glyceraldehyde 3-phosphate and glycerone phosphate from D-glucose: step 3/4. Its activity is regulated as follows. Allosterically activated by ADP and other diphosphonucleosides, and allosterically inhibited by phosphoenolpyruvate. Its function is as follows. Catalyzes the phosphorylation of D-fructose 6-phosphate to fructose 1,6-bisphosphate by ATP, the first committing step of glycolysis. The polypeptide is ATP-dependent 6-phosphofructokinase (Edwardsiella ictaluri (strain 93-146)).